The sequence spans 91 residues: UPF0250 protein BB0170 (91 aa).

The protein belongs to the UPF0250 family.

This is UPF0250 protein BB0170 from Bordetella bronchiseptica (strain ATCC BAA-588 / NCTC 13252 / RB50) (Alcaligenes bronchisepticus).